The sequence spans 502 residues: Lysine--tRNA ligase (502 aa).

2 residues coordinate Mg(2+): Glu403 and Glu410.

This sequence belongs to the class-II aminoacyl-tRNA synthetase family. As to quaternary structure, homodimer. The cofactor is Mg(2+).

It localises to the cytoplasm. It catalyses the reaction tRNA(Lys) + L-lysine + ATP = L-lysyl-tRNA(Lys) + AMP + diphosphate. The polypeptide is Lysine--tRNA ligase (Synechococcus sp. (strain CC9902)).